The primary structure comprises 347 residues: N-acetyl-gamma-glutamyl-phosphate reductase (347 aa).

Cysteine 151 is a catalytic residue.

The protein belongs to the NAGSA dehydrogenase family. Type 1 subfamily.

The protein resides in the cytoplasm. It catalyses the reaction N-acetyl-L-glutamate 5-semialdehyde + phosphate + NADP(+) = N-acetyl-L-glutamyl 5-phosphate + NADPH + H(+). The protein operates within amino-acid biosynthesis; L-arginine biosynthesis; N(2)-acetyl-L-ornithine from L-glutamate: step 3/4. In terms of biological role, catalyzes the NADPH-dependent reduction of N-acetyl-5-glutamyl phosphate to yield N-acetyl-L-glutamate 5-semialdehyde. The sequence is that of N-acetyl-gamma-glutamyl-phosphate reductase from Corynebacterium aurimucosum (strain ATCC 700975 / DSM 44827 / CIP 107346 / CN-1) (Corynebacterium nigricans).